The primary structure comprises 206 residues: Thymidylate kinase (206 aa).

11–18 (GIDGAGKT) serves as a coordination point for ATP.

It belongs to the thymidylate kinase family.

It catalyses the reaction dTMP + ATP = dTDP + ADP. Functionally, phosphorylation of dTMP to form dTDP in both de novo and salvage pathways of dTTP synthesis. The sequence is that of Thymidylate kinase from Paraburkholderia phytofirmans (strain DSM 17436 / LMG 22146 / PsJN) (Burkholderia phytofirmans).